We begin with the raw amino-acid sequence, 1403 residues long: Baculoviral IAP repeat-containing protein 1e (1403 aa).

BIR repeat units follow at residues 60–127 (EAKR…CEFL), 159–227 (EEAR…CEFL), and 278–345 (EELR…CVFL). Residues Cys315, Cys318, His335, and Cys342 each coordinate Zn(2+). The NACHT domain maps to 464-759 (SVMCVEGETG…EFLAAVRLTE (296 aa)). 473-478 (GSGKTT) provides a ligand contact to ATP.

In terms of assembly, component of the NLRC4 inflammasome, at least composed of NLRC4, caspase-1 (CASP1) and some NAIP protein. Flagellin binding by NAIP5 triggers assembly of the inflammasome, a huge complex that contains a single NAIP5 chain and multiple copies of NLRC4. (Microbial infection) Interacts with S.typhimurium (Salmonella) flagellin. As to quaternary structure, (Microbial infection) Interacts with L.pneumophila flagellin. Detected in macrophages (at protein level).

Functionally, sensor component of the NLRC4 inflammasome that specifically recognizes and binds flagellin from pathogenic bacteria such as Legionella or Salmonella. Association of pathogenic bacteria proteins drives in turn drive assembly and activation of the NLRC4 inflammasome, promoting caspase-1 activation, cytokine production and macrophage pyroptosis. The NLRC4 inflammasome is activated as part of the innate immune response to a range of intracellular bacteria. The NLRC4 inflammasome senses Gram-negative bacteria such as L.pneumophila and P.aeruginosa, enteric pathogens S.typhimurium (Salmonella) and S.flexneri. May contribute to prevent motor-neuron apoptosis induced by a variety of signals. The protein is Baculoviral IAP repeat-containing protein 1e of Mus musculus (Mouse).